We begin with the raw amino-acid sequence, 244 residues long: Carboxy-S-adenosyl-L-methionine synthase (244 aa).

S-adenosyl-L-methionine is bound by residues Tyr-41, 66 to 68 (GCS), 91 to 92 (DN), Asn-134, and Arg-201.

The protein belongs to the class I-like SAM-binding methyltransferase superfamily. Cx-SAM synthase family. In terms of assembly, homodimer.

It catalyses the reaction prephenate + S-adenosyl-L-methionine = carboxy-S-adenosyl-L-methionine + 3-phenylpyruvate + H2O. Functionally, catalyzes the conversion of S-adenosyl-L-methionine (SAM) to carboxy-S-adenosyl-L-methionine (Cx-SAM). This Colwellia psychrerythraea (strain 34H / ATCC BAA-681) (Vibrio psychroerythus) protein is Carboxy-S-adenosyl-L-methionine synthase.